We begin with the raw amino-acid sequence, 196 residues long: Pyridoxine/pyridoxamine 5'-phosphate oxidase (196 aa).

Residues 46–51 (RNVLYK), 61–62 (FT), arginine 67, lysine 68, and glutamine 90 each bind FMN. Lysine 51 lines the substrate pocket. Substrate contacts are provided by tyrosine 108, arginine 112, and serine 116. FMN-binding positions include 125 to 126 (QS) and tryptophan 169. 175 to 177 (RLH) is a substrate binding site. An FMN-binding site is contributed by arginine 179.

The protein belongs to the pyridoxamine 5'-phosphate oxidase family. Homodimer. FMN serves as cofactor.

The enzyme catalyses pyridoxamine 5'-phosphate + O2 + H2O = pyridoxal 5'-phosphate + H2O2 + NH4(+). The catalysed reaction is pyridoxine 5'-phosphate + O2 = pyridoxal 5'-phosphate + H2O2. Its pathway is cofactor metabolism; pyridoxal 5'-phosphate salvage; pyridoxal 5'-phosphate from pyridoxamine 5'-phosphate: step 1/1. It participates in cofactor metabolism; pyridoxal 5'-phosphate salvage; pyridoxal 5'-phosphate from pyridoxine 5'-phosphate: step 1/1. In terms of biological role, catalyzes the oxidation of either pyridoxine 5'-phosphate (PNP) or pyridoxamine 5'-phosphate (PMP) into pyridoxal 5'-phosphate (PLP). This is Pyridoxine/pyridoxamine 5'-phosphate oxidase from Coxiella burnetii (strain RSA 493 / Nine Mile phase I).